The sequence spans 189 residues: Probable chorismate pyruvate-lyase (189 aa).

Substrate is bound by residues R74, L113, and E175.

Belongs to the UbiC family.

The protein resides in the cytoplasm. It carries out the reaction chorismate = 4-hydroxybenzoate + pyruvate. It participates in cofactor biosynthesis; ubiquinone biosynthesis. Removes the pyruvyl group from chorismate, with concomitant aromatization of the ring, to provide 4-hydroxybenzoate (4HB) for the ubiquinone pathway. The protein is Probable chorismate pyruvate-lyase of Azoarcus sp. (strain BH72).